The chain runs to 142 residues: Neuritin (142 aa).

An N-terminal signal peptide occupies residues 1-27 (MGLKLNGRYISLILAVQIAYLVQAVRA). A lipid anchor (GPI-anchor amidated glycine) is attached at Gly116. Positions 117–142 (AAGSLLPALSVLLVSLSAALATWFSF) are cleaved as a propeptide — removed in mature form.

Belongs to the neuritin family. Component of the outer core of AMPAR complex. AMPAR complex consists of an inner core made of 4 pore-forming GluA/GRIA proteins (GRIA1, GRIA2, GRIA3 and GRIA4) and 4 major auxiliary subunits arranged in a twofold symmetry. One of the two pairs of distinct binding sites is occupied either by CNIH2, CNIH3 or CACNG2, CACNG3. The other harbors CACNG2, CACNG3, CACNG4, CACNG8 or GSG1L. This inner core of AMPAR complex is complemented by outer core constituents binding directly to the GluA/GRIA proteins at sites distinct from the interaction sites of the inner core constituents. Outer core constituents include at least PRRT1, PRRT2, CKAMP44/SHISA9, FRRS1L and NRN1. The proteins of the inner and outer core serve as a platform for other, more peripherally associated AMPAR constituents. Alone or in combination, these auxiliary subunits control the gating and pharmacology of the AMPAR complex and profoundly impact their biogenesis and protein processing. Expressed in the brain (at protein level).

The protein localises to the cell membrane. It is found in the synapse. Promotes neurite outgrowth and especially branching of neuritic processes in primary hippocampal and cortical cells. The chain is Neuritin (Nrn1) from Mus musculus (Mouse).